Consider the following 393-residue polypeptide: Probable protein phosphatase 2C 72 (393 aa).

The PPM-type phosphatase domain maps to 49 to 357 (EFSMAVVQAN…DDITVVVVFF (309 aa)). Mn(2+)-binding residues include Asp-88 and Gly-89. Residues 147 to 167 (LAAVGSCCLVGVICAGNLYIA) form a helical membrane-spanning segment. The Mn(2+) site is built by Asp-289 and Asp-348.

Belongs to the PP2C family. It depends on Mg(2+) as a cofactor. The cofactor is Mn(2+).

It localises to the membrane. The catalysed reaction is O-phospho-L-seryl-[protein] + H2O = L-seryl-[protein] + phosphate. It carries out the reaction O-phospho-L-threonyl-[protein] + H2O = L-threonyl-[protein] + phosphate. This is Probable protein phosphatase 2C 72 from Oryza sativa subsp. japonica (Rice).